The chain runs to 287 residues: GPN-loop GTPase 3 (287 aa).

A GTP-binding site is contributed by 12–17; that stretch reads GAGKST. Residues 69-71 carry the Gly-Pro-Asn (GPN)-loop; involved in dimer interface motif; it reads GPN. 172–175 is a binding site for GTP; that stretch reads SKMD.

Belongs to the GPN-loop GTPase family. As to quaternary structure, heterodimers with GPN1 or GPN2. Binds to RNA polymerase II (RNAPII).

In terms of biological role, small GTPase required for proper nuclear import of RNA polymerase II and III (RNAPII and RNAPIII). May act at an RNAP assembly step prior to nuclear import. This is GPN-loop GTPase 3 from Cryptococcus neoformans var. neoformans serotype D (strain B-3501A) (Filobasidiella neoformans).